The chain runs to 183 residues: Orotate phosphoribosyltransferase (183 aa).

Residues arginine 100, lysine 101, lysine 104, histidine 106, and 126-134 each bind 5-phospho-alpha-D-ribose 1-diphosphate; that span reads EDVVTTGSS. Threonine 130 and arginine 158 together coordinate orotate.

Belongs to the purine/pyrimidine phosphoribosyltransferase family. PyrE subfamily. As to quaternary structure, homodimer. Mg(2+) serves as cofactor.

The catalysed reaction is orotidine 5'-phosphate + diphosphate = orotate + 5-phospho-alpha-D-ribose 1-diphosphate. It participates in pyrimidine metabolism; UMP biosynthesis via de novo pathway; UMP from orotate: step 1/2. In terms of biological role, catalyzes the transfer of a ribosyl phosphate group from 5-phosphoribose 1-diphosphate to orotate, leading to the formation of orotidine monophosphate (OMP). The protein is Orotate phosphoribosyltransferase of Aquifex aeolicus (strain VF5).